Here is a 242-residue protein sequence, read N- to C-terminus: Orotidine 5'-phosphate decarboxylase (242 aa).

Substrate-binding positions include aspartate 16, lysine 37, 64 to 73 (DLKFHDIPNT), threonine 128, arginine 190, glutamine 199, glycine 219, and arginine 220. The Proton donor role is filled by lysine 66.

This sequence belongs to the OMP decarboxylase family. Type 1 subfamily. Homodimer.

It carries out the reaction orotidine 5'-phosphate + H(+) = UMP + CO2. Its pathway is pyrimidine metabolism; UMP biosynthesis via de novo pathway; UMP from orotate: step 2/2. Catalyzes the decarboxylation of orotidine 5'-monophosphate (OMP) to uridine 5'-monophosphate (UMP). This is Orotidine 5'-phosphate decarboxylase from Prochlorococcus marinus (strain MIT 9215).